The sequence spans 857 residues: MTRRRVLSVVVLLAALACRLGAQTPEQPAPPATTVQPTATRQQTSFPFRVCELSSHGDLFRFSSDIQCPSFGTRENHTEGLLMVFKDNIIPYSFKVRSYTKIVTNILIYNGWYADSVTNRHEEKFSVDSYETDQMDTIYQCYNAVKMTKDGLTRVYVDRDGVNITVNLKPTGGLANGVRRYASQTELYDAPGWLIWTYRTRTTVNCLITDMMAKSNSPFDFFVTTTGQTVEMSPFYDGKNKETFHERADSFHVRTNYKIVDYDNRGTNPQGERRAFLDKGTYTLSWKLENRTAYCPLQHWQTFDSTIATETGKSIHFVTDEGTSSFVTNTTVGIELPDAFKCIEEQVNKTMHEKYEAVQDRYTKGQEAITYFITSGGLLLAWLPLTPRSLATVKNLTELTTPTSSPPSSPSPPAPPAARGSTSAAVLRRRRRDAGNATTPVPPAAPGKSLGTLNNPATVQIQFAYDSLRRQINRMLGDLARAWCLEQKRQNMVLRELTKINPTTVMSSIYGKAVAAKRLGDVISVSQCVPVNQATVTLRKSMRVPGSETMCYSRPLVSFSFINDTKTYEGQLGTDNEIFLTKKMTEVCQATSQYYFQSGNEIHVYNDYHHFKTIELDGIATLQTFISLNTSLIENIDFASLELYSRDEQRASNVFDLEGIFREYNFQAQNIAGLRKDLDNAVSNGRNQFVDGLGELMDSLGSVGQSITNLVSTVGGLFSSLVSGFISFFKNPFGGMLILVLVAGVVILVISLTRRTRQMSQQPVQMLYPGIDELAQQHASGEGPGINPISKTELQAIMLALHEQNQEQKRAAQRAAGPSVASRALQAARDRFPGLRRRRYHDPETAAALLGEAETEF.

A signal peptide spans 1 to 21 (MTRRRVLSVVVLLAALACRLG). The Virion surface portion of the chain corresponds to 22 to 732 (AQTPEQPAPP…SGFISFFKNP (711 aa)). Disulfide bonds link cysteine 51-cysteine 528, cysteine 68-cysteine 484, cysteine 141-cysteine 206, cysteine 295-cysteine 342, and cysteine 551-cysteine 588. Asparagine 76 carries N-linked (GlcNAc...) asparagine; by host glycosylation. Residues 108 to 114 (IYNGWYA) form an involved in fusion and/or binding to host membrane region. N-linked (GlcNAc...) asparagine; by host glycosylation is present at asparagine 163. Residues 192-200 (GWLIWTYRT) are involved in fusion and/or binding to host membrane. Residues asparagine 290, asparagine 329, asparagine 348, and asparagine 395 are each glycosylated (N-linked (GlcNAc...) asparagine; by host). The interval 398–452 (ELTTPTSSPPSSPSPPAPPAARGSTSAAVLRRRRRDAGNATTPVPPAAPGKSLGT) is disordered. A compositionally biased stretch (pro residues) spans 404-416 (SSPPSSPSPPAPP). 3 N-linked (GlcNAc...) asparagine; by host glycosylation sites follow: asparagine 436, asparagine 563, and asparagine 629. Hydrophobic membrane proximal region regions lie at residues 678–730 (LDNA…SFFK) and 709–729 (NLVS…ISFF). Residues 733–753 (FGGMLILVLVAGVVILVISLT) form a helical membrane-spanning segment. At 754 to 857 (RRTRQMSQQP…ALLGEAETEF (104 aa)) the chain is on the intravirion side. The segment at 832 to 857 (FPGLRRRRYHDPETAAALLGEAETEF) is disordered. Low complexity predominate over residues 845 to 857 (TAAALLGEAETEF).

The protein belongs to the herpesviridae glycoprotein B family. As to quaternary structure, homotrimer; disulfide-linked. Binds to heparan sulfate proteoglycans. Interacts with gH/gL heterodimer. Post-translationally, a proteolytic cleavage by host furin generates two subunits that remain linked by disulfide bonds.

It is found in the virion membrane. The protein resides in the host cell membrane. The protein localises to the host endosome membrane. Its subcellular location is the host Golgi apparatus membrane. Its function is as follows. Envelope glycoprotein that forms spikes at the surface of virion envelope. Essential for the initial attachment to heparan sulfate moieties of the host cell surface proteoglycans. Involved in fusion of viral and cellular membranes leading to virus entry into the host cell. Following initial binding to its host receptors, membrane fusion is mediated by the fusion machinery composed at least of gB and the heterodimer gH/gL. May be involved in the fusion between the virion envelope and the outer nuclear membrane during virion egress. The polypeptide is Envelope glycoprotein B (Epstein-Barr virus (strain GD1) (HHV-4)).